The following is a 534-amino-acid chain: Probable bifunctional tRNA threonylcarbamoyladenosine biosynthesis protein (534 aa).

The interval 1-324 is kae1; the sequence is MICLGIEGTA…YRTDQVEVTW (324 aa). Histidine 108, histidine 112, and tyrosine 129 together coordinate Fe cation. L-threonylcarbamoyladenylate-binding positions include 129 to 133, aspartate 161, glycine 174, glutamate 178, and asparagine 258; that span reads YTSGG. Residue aspartate 286 coordinates Fe cation. Positions 335-534 constitute a Protein kinase domain; it reads LPDNIKEKGA…DEIEKRGRYL (200 aa). Residues 340–348 and lysine 361 each bind ATP; that span reads KEKGAEADI. Aspartate 455 acts as the Proton acceptor; for kinase activity in catalysis.

The protein in the N-terminal section; belongs to the KAE1 / TsaD family. It in the C-terminal section; belongs to the protein kinase superfamily. Tyr protein kinase family. BUD32 subfamily. Component of the KEOPS complex that consists of Kae1, Bud32, Cgi121 and Pcc1; the whole complex dimerizes. Fe(2+) is required as a cofactor.

The protein resides in the cytoplasm. It catalyses the reaction L-seryl-[protein] + ATP = O-phospho-L-seryl-[protein] + ADP + H(+). It carries out the reaction L-threonyl-[protein] + ATP = O-phospho-L-threonyl-[protein] + ADP + H(+). The enzyme catalyses L-threonylcarbamoyladenylate + adenosine(37) in tRNA = N(6)-L-threonylcarbamoyladenosine(37) in tRNA + AMP + H(+). Its function is as follows. Required for the formation of a threonylcarbamoyl group on adenosine at position 37 (t(6)A37) in tRNAs that read codons beginning with adenine. Is a component of the KEOPS complex that is probably involved in the transfer of the threonylcarbamoyl moiety of threonylcarbamoyl-AMP (TC-AMP) to the N6 group of A37. The Kae1 domain likely plays a direct catalytic role in this reaction. The Bud32 domain probably displays kinase activity that regulates Kae1 function. This is Probable bifunctional tRNA threonylcarbamoyladenosine biosynthesis protein from Methanosphaera stadtmanae (strain ATCC 43021 / DSM 3091 / JCM 11832 / MCB-3).